We begin with the raw amino-acid sequence, 257 residues long: NAD-capped RNA hydrolase NudC (257 aa).

R69 lines the substrate pocket. 2 residues coordinate Zn(2+): C98 and C101. E111 is a substrate binding site. Positions 116 and 119 each coordinate Zn(2+). Residue Y124 coordinates substrate. The region spanning 125 to 248 (PQIAPCIIVA…TVARRLIEDT (124 aa)) is the Nudix hydrolase domain. Residues A158, E174, and E178 each coordinate a divalent metal cation. The Nudix box signature appears at 159 to 180 (GFVEVGETLEQAVAREVMEESG). 192–199 (QPWPFPQS) is a binding site for substrate. An a divalent metal cation-binding site is contributed by E219. Residue A241 coordinates substrate.

It belongs to the Nudix hydrolase family. NudC subfamily. In terms of assembly, homodimer. Mg(2+) is required as a cofactor. The cofactor is Mn(2+). Requires Zn(2+) as cofactor.

The enzyme catalyses a 5'-end NAD(+)-phospho-ribonucleoside in mRNA + H2O = a 5'-end phospho-adenosine-phospho-ribonucleoside in mRNA + beta-nicotinamide D-ribonucleotide + 2 H(+). It carries out the reaction NAD(+) + H2O = beta-nicotinamide D-ribonucleotide + AMP + 2 H(+). It catalyses the reaction NADH + H2O = reduced beta-nicotinamide D-ribonucleotide + AMP + 2 H(+). Its function is as follows. mRNA decapping enzyme that specifically removes the nicotinamide adenine dinucleotide (NAD) cap from a subset of mRNAs by hydrolyzing the diphosphate linkage to produce nicotinamide mononucleotide (NMN) and 5' monophosphate mRNA. The NAD-cap is present at the 5'-end of some mRNAs and stabilizes RNA against 5'-processing. Has preference for mRNAs with a 5'-end purine. Catalyzes the hydrolysis of a broad range of dinucleotide pyrophosphates. This is NAD-capped RNA hydrolase NudC from Salmonella schwarzengrund (strain CVM19633).